The chain runs to 340 residues: Glycerol-3-phosphate dehydrogenase [NAD(P)+] (340 aa).

NADPH-binding residues include serine 11, tryptophan 12, arginine 33, and lysine 106. Residues lysine 106, glycine 137, and serine 139 each contribute to the sn-glycerol 3-phosphate site. Alanine 141 is an NADPH binding site. The sn-glycerol 3-phosphate site is built by lysine 192, aspartate 245, serine 255, arginine 256, and asparagine 257. Residue lysine 192 is the Proton acceptor of the active site. Arginine 256 is an NADPH binding site. 2 residues coordinate NADPH: valine 280 and glutamate 282.

This sequence belongs to the NAD-dependent glycerol-3-phosphate dehydrogenase family.

It is found in the cytoplasm. It catalyses the reaction sn-glycerol 3-phosphate + NAD(+) = dihydroxyacetone phosphate + NADH + H(+). The enzyme catalyses sn-glycerol 3-phosphate + NADP(+) = dihydroxyacetone phosphate + NADPH + H(+). It participates in membrane lipid metabolism; glycerophospholipid metabolism. In terms of biological role, catalyzes the reduction of the glycolytic intermediate dihydroxyacetone phosphate (DHAP) to sn-glycerol 3-phosphate (G3P), the key precursor for phospholipid synthesis. The protein is Glycerol-3-phosphate dehydrogenase [NAD(P)+] of Bacillus mycoides (strain KBAB4) (Bacillus weihenstephanensis).